The sequence spans 757 residues: Endosialin (757 aa).

The signal sequence occupies residues 1 to 17; sequence MLLRLLLAWAAAGPTLG. Residues 18 to 687 lie on the Extracellular side of the membrane; that stretch reads QDPWAAEPRA…EHSQRDDRWL (670 aa). Residues 30–156 enclose the C-type lectin domain; it reads GPSSCYALFP…CTLAVDGYLC (127 aa). O-linked (GalNAc...) threonine glycosylation is present at threonine 60. Residues cysteine 131 and cysteine 147 are joined by a disulfide bond. In terms of domain architecture, Sushi spans 162–232; it reads GACPALQDEA…WSRAGPLCLG (71 aa). The region spanning 312-351 is the EGF-like; calcium-binding domain; the sequence is DTDECQIAGVCQQMCVNYVGGFECYCSEGHELEADGISCS. 3 disulfides stabilise this stretch: cysteine 316–cysteine 326, cysteine 322–cysteine 335, and cysteine 337–cysteine 350. Residues threonine 401, threonine 428, threonine 448, threonine 456, threonine 459, threonine 472, threonine 519, threonine 541, threonine 543, threonine 544, threonine 545, threonine 587, threonine 593, threonine 594, and threonine 595 are each glycosylated (O-linked (GalNAc...) threonine). O-linked (GalNAc...) serine glycosylation is found at serine 598 and serine 601. O-linked (GalNAc...) threonine glycosylation is found at threonine 612 and threonine 619. Residues 618–627 are compositionally biased toward low complexity; that stretch reads PTLLPSQSPT. The segment at 618–662 is disordered; the sequence is PTLLPSQSPTNQTSPISPTHPHSKAPQIPREDGPSPKLALWLPSP. Residues serine 623 and serine 625 are each glycosylated (O-linked (GalNAc...) serine). O-linked (GalNAc...) threonine glycans are attached at residues threonine 627 and threonine 630. Serine 631 carries an O-linked (GalNAc...) serine glycan. An O-linked (GalNAc...) threonine glycan is attached at threonine 636. Residue serine 640 is glycosylated (O-linked (GalNAc...) serine). The chain crosses the membrane as a helical span at residues 688–708; sequence LVALLVPTCVFLVVLLALGIV. At 709–757 the chain is on the cytoplasmic side; the sequence is YCTRCGPHAPNKRITDCYRWVIHAGSKSPTEPMPPRGSLTGVQTCRTSV. The segment at 737-757 is disordered; sequence PTEPMPPRGSLTGVQTCRTSV. A Phosphoserine modification is found at serine 746. Polar residues predominate over residues 748 to 757; it reads TGVQTCRTSV.

Interacts with PDGFRA; this interaction promotes PDGF receptor signaling pathway. Interacts with integrin beta-1/ITGB1. Interacts with insulin receptor/INSR; this interaction diminishes INSR autophosphorylation. In terms of processing, O-glycosylated with sialylated oligosaccharides. Post-translationally, may be N-glycosylated. As to expression, expressed in tumor endothelial cells but absent or barely detectable in normal endothelial cells. Expressed in metastatic lesions of the liver and during angiogenesis of corpus luteum formation and wound healing. Expressed in vascular endothelial cells of malignant tumors but not in normal blood vessels. Expressed in stromal fibroblasts. Strongly expressed in pericytes. Expressed on stromal cells and cells with lymphoid morphology such a T-cells.

Its subcellular location is the membrane. In terms of biological role, cell surface glycoprotein involved in various biological processes including angiogenesis, immune response modulation, and tissue remodeling and repair. Participates in pericyte proliferation through positive modulation of the PDGF receptor signaling pathway. Acts as a scaffold for factor X, triggering allosteric changes and the spatial re-alignment of factor X with the TF-factor VIIa complex, thereby enhancing coagulation activation. Modulates the insulin signaling pathway by interacting with insulin receptor/INSR and by diminishing its capacity to be autophosphorylated in response to insulin. Also regulates LPS-induced inflammatory response in macrophages by favoring the production of proinflammatory cytokines. In human, negatively regulates T-cell proliferation compared with stromal cells where it increases proliferation. In Homo sapiens (Human), this protein is Endosialin (CD248).